Reading from the N-terminus, the 303-residue chain is MNDAKKYIVSVLILLVAGMFGGCIKEDYSDCPRPFRLTVRAWDADMQDITETGAVQRVVIFVFDETGRRIDRLMMDAAQVAARKPIPLEYDGPTTVSFVAWANPDDHMLEETANVQNVKDLFFRLSSTDGIAQSPGDLFSGVLTCPIEYGSIEQGTDQTVDIYRRTAQVHIIIRGYQEWLEANGPRQLPDYADILLGETPDTYTGLAELIGNAVQYRPDGQIQNGDFISPIIRVYPTLDTTPLHLKLYAYGQELLNISTGSDGVPFIPVIGKMLNIYIDLRGANLNVLVSVTPWDVVQQYAEY.

An N-terminal signal peptide occupies residues 1–22 (MNDAKKYIVSVLILLVAGMFGG). C23 carries N-palmitoyl cysteine lipidation. The S-diacylglycerol cysteine moiety is linked to residue C23.

The protein belongs to the bacteroidetes fimbrillin superfamily. FimB/Mfa2 family. As to quaternary structure, fimB is not part of the fimbrium itself, but anchors the fimbrium in the outer membrane. Linear, head-to-tail oligomerization of fimbrial subunits mediates assembly of the fimbrium stalk, while the minor components FimC, FimD and FimE probably form the fimbrium tip. The anchoring subunit FimB limits fimbrium length and is important for solid fimbrium attachment to the outer membrane. In its absence, the major fimbriae become very long and are easily detached from the membrane.

It is found in the cell outer membrane. In terms of biological role, anchoring subunit of the major fimbriae. Regulates fimbrial length. These filamentous pili are attached to the cell surface; they mediate biofilm formation, adhesion onto host cells and onto other bacteria that are part of the oral microbiome. Fimbriae of P.gingivalis are major virulence factors. In Porphyromonas gingivalis (strain ATCC 33277 / DSM 20709 / CIP 103683 / JCM 12257 / NCTC 11834 / 2561), this protein is Major fimbrium anchoring subunit FimB.